The primary structure comprises 417 residues: UPF0761 membrane protein Veis_3782 (417 aa).

Helical transmembrane passes span 54–74 (ILALVPFFTVALAVFTAFPIF), 111–131 (GLGLAGFSVLLVTALALILTI), 151–171 (VLIYWAAITLGPLLLGASLAL), 192–212 (FLFDSLQFMVLAAGMALLYHY), 226–246 (GGLFVALCIELAKKALALYLG), and 261–281 (LPILLVWIYMAWVIVLLGAVV).

Belongs to the UPF0761 family.

It localises to the cell inner membrane. The protein is UPF0761 membrane protein Veis_3782 of Verminephrobacter eiseniae (strain EF01-2).